The sequence spans 324 residues: MKTALILLSILGMACAFSMKNFHRRIKAEDSEENGVFKYRPRYFLYKHAYFYPPLKRFPVQGGSDSSEENGDGDSSEEEGEEEETSNEEENNEDSEGNEDQEAEAENSTLSTLSGVTASYGAETTPQAQTFELAALQLPKKAGDAESRAPKVKESDEEEEEEEEEEENENEEAEVDENELAVNGTSTNSTEVDGGNGSSGGDNGEEAEAEEASVTEAGAEGTTGGRELTSVGTQTAVLLNGFQQTTPPPEAYGTTSPPIRKSSTVEYGGEYEQTGNEYNNEYEVYDNENGEPRGDTYRAYEDEYSYYKGHGYEGYEGQNYYYHQ.

The signal sequence occupies residues 1–16; the sequence is MKTALILLSILGMACA. Ser-31, Ser-67, Ser-75, Ser-76, and Ser-95 each carry phosphoserine. 2 disordered regions span residues 60–228 and 243–263; these read VQGG…GREL and QQTT…RKSS. The span at 66–105 shows a compositional bias: acidic residues; sequence SSEENGDGDSSEEEGEEEETSNEEENNEDSEGNEDQEAEA. The segment covering 106 to 130 has biased composition (polar residues); that stretch reads ENSTLSTLSGVTASYGAETTPQAQT. Asn-107 is a glycosylation site (N-linked (GlcNAc...) asparagine). The span at 141–154 shows a compositional bias: basic and acidic residues; that stretch reads KAGDAESRAPKVKE. Ser-155 is subject to Phosphoserine. A compositionally biased stretch (acidic residues) spans 155 to 179; that stretch reads SDEEEEEEEEEEENENEEAEVDENE. N-linked (GlcNAc...) asparagine glycans are attached at residues Asn-183, Asn-188, and Asn-196. Residues 203–213 show a composition bias toward acidic residues; sequence NGEEAEAEEAS. Residues 253–263 are compositionally biased toward polar residues; sequence GTTSPPIRKSS. Positions 293 to 295 match the Integrin-binding motif motif; it reads RGD. Tyr-320 and Tyr-321 each carry sulfotyrosine.

Monomer. Interacts with integrins; the interaction promotes cell adhesion.

It localises to the secreted. Functionally, binds tightly to hydroxyapatite. Appears to form an integral part of the mineralized matrix. Probably important to cell-matrix interaction. Promotes adhesion and migration of various cells via the alpha-V/beta-3 integrin receptor (ITGAV:ITGB3). This chain is Integrin-binding sialoprotein (Ibsp), found in Mus musculus (Mouse).